We begin with the raw amino-acid sequence, 691 residues long: Lipase 2 (691 aa).

Residues Met-1–Ala-37 form the signal peptide. The tract at residues Glu-34–Lys-267 is disordered. The propeptide occupies Ser-38–Lys-296. A compositionally biased stretch (polar residues) spans Ile-41–Lys-72. The span at Gln-73–Gly-82 shows a compositional bias: basic and acidic residues. 4 stretches are compositionally biased toward polar residues: residues Leu-94–Gln-115, Ser-125–Asn-135, Asp-142–Ile-172, and Pro-186–Lys-196. Basic and acidic residues-rich tracts occupy residues Thr-197–Asn-214 and Lys-258–Lys-267. The active-site Nucleophile is the Ser-413. Ca(2+) is bound at residue Gly-580. Asp-604 functions as the Charge relay system in the catalytic mechanism. Asp-645 lines the Ca(2+) pocket. His-646 serves as the catalytic Charge relay system. Ca(2+)-binding residues include Asp-648, Asp-653, and Asp-656.

Belongs to the AB hydrolase superfamily. Lipase family.

It localises to the secreted. The enzyme catalyses a triacylglycerol + H2O = a diacylglycerol + a fatty acid + H(+). The protein is Lipase 2 (lip2) of Staphylococcus aureus (strain MRSA252).